A 704-amino-acid polypeptide reads, in one-letter code: Phosphoribosylformylglycinamidine synthase subunit PurL (704 aa).

The active site involves His-32. Tyr-35 is an ATP binding site. A Mg(2+)-binding site is contributed by Glu-76. Substrate contacts are provided by residues Ser-77–His-80 and Arg-99. Residue His-78 is the Proton acceptor of the active site. Asp-100 provides a ligand contact to Mg(2+). Position 224 (Gln-224) interacts with substrate. A Mg(2+)-binding site is contributed by Asp-252. Substrate is bound at residue Glu-296 to Gln-298. Asp-471 and Gly-508 together coordinate ATP. Asn-509 contributes to the Mg(2+) binding site. A substrate-binding site is contributed by Ser-511.

The protein belongs to the FGAMS family. As to quaternary structure, monomer. Part of the FGAM synthase complex composed of 1 PurL, 1 PurQ and 2 PurS subunits.

It localises to the cytoplasm. The enzyme catalyses N(2)-formyl-N(1)-(5-phospho-beta-D-ribosyl)glycinamide + L-glutamine + ATP + H2O = 2-formamido-N(1)-(5-O-phospho-beta-D-ribosyl)acetamidine + L-glutamate + ADP + phosphate + H(+). It participates in purine metabolism; IMP biosynthesis via de novo pathway; 5-amino-1-(5-phospho-D-ribosyl)imidazole from N(2)-formyl-N(1)-(5-phospho-D-ribosyl)glycinamide: step 1/2. Functionally, part of the phosphoribosylformylglycinamidine synthase complex involved in the purines biosynthetic pathway. Catalyzes the ATP-dependent conversion of formylglycinamide ribonucleotide (FGAR) and glutamine to yield formylglycinamidine ribonucleotide (FGAM) and glutamate. The FGAM synthase complex is composed of three subunits. PurQ produces an ammonia molecule by converting glutamine to glutamate. PurL transfers the ammonia molecule to FGAR to form FGAM in an ATP-dependent manner. PurS interacts with PurQ and PurL and is thought to assist in the transfer of the ammonia molecule from PurQ to PurL. The polypeptide is Phosphoribosylformylglycinamidine synthase subunit PurL (Pyrococcus furiosus (strain ATCC 43587 / DSM 3638 / JCM 8422 / Vc1)).